Consider the following 180-residue polypeptide: Cytidylate kinase (180 aa).

Position 7-15 (7-15 (GLPGSGTTT)) interacts with ATP.

Belongs to the cytidylate kinase family. Type 2 subfamily.

It is found in the cytoplasm. The enzyme catalyses CMP + ATP = CDP + ADP. The catalysed reaction is dCMP + ATP = dCDP + ADP. This is Cytidylate kinase from Methanosarcina barkeri (strain Fusaro / DSM 804).